The chain runs to 345 residues: Beta-2-glycoprotein 1 (345 aa).

The N-terminal stretch at 1–19 is a signal peptide; sequence MPPPALVLLLGFLCHVAIA. 4 consecutive Sushi domains span residues 21 to 81, 82 to 139, 140 to 202, and 203 to 262; these read RTCP…KCMP, RVCP…VCAP, ITCP…ECRE, and VRCP…SCKA. Disulfide bonds link Cys-23/Cys-66, Cys-51/Cys-79, Cys-84/Cys-124, Cys-110/Cys-137, Cys-142/Cys-188, Cys-174/Cys-200, Cys-205/Cys-248, Cys-234/Cys-260, Cys-264/Cys-315, Cys-300/Cys-325, and Cys-307/Cys-345. A glycan (O-linked (GalNAc...) threonine) is linked at Thr-33. The N-linked (GlcNAc...) asparagine glycan is linked to Asn-92. Residues Asn-162, Asn-183, and Asn-193 are each glycosylated (N-linked (GlcNAc...) asparagine). The N-linked (GlcNAc...) asparagine glycan is linked to Asn-253. A sushi-like region spans residues 263-345; it reads SCKLSIKRAT…KTDASDVKPC (83 aa).

As to expression, expressed by the liver and secreted in plasma.

The protein localises to the secreted. In terms of biological role, binds to various kinds of negatively charged substances such as heparin, phospholipids, and dextran sulfate. May prevent activation of the intrinsic blood coagulation cascade by binding to phospholipids on the surface of damaged cells. The protein is Beta-2-glycoprotein 1 (APOH) of Bos taurus (Bovine).